The following is a 546-amino-acid chain: MDKSKINLAVIVPLFFIMLYLLPLGLRDLWSPDELRYAEIAREMVDSGNWIVPTFNDIRYFEKPVMGHWMNAISQVLFGENNFSVRAASAFSTLGAAFCLFLLVGRFANRKQAWVTVSVFLSLFLVSNLGTYSVLDGMLNLWLTAAFTAFFYAADSPTTSQRCRFYGLAGLFCACALLTKGFLALALPVIVVVPFMIWQRQLVDILRWGWWVMLVALIVTLPWALAIHAAEPDYWHYFFWVEHIQRFAAEDAQHTSPAWYYLPYLLLGTLPWLFLAPSAIKHLKGHWQSPLLRYALLWALIPFIFFSAAKGKLVTYILPCMAPLAIILAQGIISAFENRAKGLKIGSVINCAFFSLISVAVIVLFYMGRLPLEAEEFYRPWLLVVVCGSWAVLAYISIKAKSLEGKIASYMLMPLSLFLLAWAIIPNISIDSKMPGRFLEQVSPLVSDDAILIADYPSTMSAFNWYFKRRDVYLTGNTGEVSYGIGYDDAKHKYVAPSLLGEFIRKQSVPVVILFREMDVPQSLPEPDKRIERGKFTLVYYDRVKR.

The next 12 membrane-spanning stretches (helical) occupy residues 6–26 (INLAVIVPLFFIMLYLLPLGL), 87–107 (AASAFSTLGAAFCLFLLVGRF), 113–133 (AWVTVSVFLSLFLVSNLGTYS), 177–197 (LLTKGFLALALPVIVVVPFMI), 208–228 (WGWWVMLVALIVTLPWALAIH), 260–280 (YYLPYLLLGTLPWLFLAPSAI), 289–309 (SPLLRYALLWALIPFIFFSAA), 313–333 (LVTYILPCMAPLAIILAQGII), 345–365 (IGSVINCAFFSLISVAVIVLF), 380–400 (PWLLVVVCGSWAVLAYISIKA), 410–430 (YMLMPLSLFLLAWAIIPNISI), and 450–467 (AILIADYPSTMSAFNWYF).

This sequence belongs to the glycosyltransferase 83 family.

Its subcellular location is the cell inner membrane. The enzyme catalyses 4-amino-4-deoxy-alpha-L-arabinopyranosyl di-trans,octa-cis-undecaprenyl phosphate + lipid IVA = lipid IIA + di-trans,octa-cis-undecaprenyl phosphate.. It participates in lipopolysaccharide metabolism; 4-amino-4-deoxy-beta-L-arabinose-lipid A biosynthesis. Functionally, catalyzes the transfer of the L-Ara4N moiety of the glycolipid undecaprenyl phosphate-alpha-L-Ara4N to lipid A. The modified arabinose is attached to lipid A and is required for resistance to polymyxin and cationic antimicrobial peptides. This is Undecaprenyl phosphate-alpha-4-amino-4-deoxy-L-arabinose arabinosyl transferase from Shewanella sediminis (strain HAW-EB3).